Consider the following 361-residue polypeptide: Probable S-adenosylmethionine-dependent methyltransferase At5g38780 (361 aa).

S-adenosyl-L-homocysteine is bound by residues Tyr19, Cys64, Asn69, Asp106, Leu107, Ser135, and Phe136. 4 residues coordinate Mg(2+): Asn174, Glu260, Phe262, and Asn263.

This sequence belongs to the methyltransferase superfamily. Type-7 methyltransferase family. Homodimer. Mg(2+) serves as cofactor.

The protein is Probable S-adenosylmethionine-dependent methyltransferase At5g38780 of Arabidopsis thaliana (Mouse-ear cress).